Consider the following 173-residue polypeptide: NADH-ubiquinone oxidoreductase chain 6 (173 aa).

The next 5 membrane-spanning stretches (helical) occupy residues 1-21 (MTYFVLFLGLCFVLGGLAVAS), 27-47 (YGVVGLVLASVAGCGWLLSLG), 48-68 (VSFVSLVLFMVYLGGMLVVFV), 87-107 (VVGYGVGFVVVLVVGLVVGGF), and 139-159 (CGVGMFLVAGWGLLLTLFVVL).

Belongs to the complex I subunit 6 family.

It is found in the mitochondrion membrane. It catalyses the reaction a ubiquinone + NADH + 5 H(+)(in) = a ubiquinol + NAD(+) + 4 H(+)(out). Functionally, core subunit of the mitochondrial membrane respiratory chain NADH dehydrogenase (Complex I) that is believed to belong to the minimal assembly required for catalysis. Complex I functions in the transfer of electrons from NADH to the respiratory chain. The immediate electron acceptor for the enzyme is believed to be ubiquinone. This is NADH-ubiquinone oxidoreductase chain 6 (MT-ND6) from Ptychoramphus aleuticus (Cassin's auklet).